The sequence spans 207 residues: MERKERLRAGIAAMGLDISETAQDRLLAYVDLLKKWNKTYNLTALRDEEKMIVHHLLDSLTLLPHIEGVQTMLDVGSGGGQPGIPAAVCRPDVQITLLDANTKKTAFLQQAVIELGLDNVRVVSGRVEAVSDVRADVVTSRAFAELADFVSWTGHLLKDGGYWAAMKGVYPQGEIGRLPQDVCVEKVQRLDVPGLDAERHIVILSKR.

Residues Gly-76, Gln-81, 127-128 (VE), and Arg-141 contribute to the S-adenosyl-L-methionine site.

It belongs to the methyltransferase superfamily. RNA methyltransferase RsmG family.

It localises to the cytoplasm. The enzyme catalyses guanosine(527) in 16S rRNA + S-adenosyl-L-methionine = N(7)-methylguanosine(527) in 16S rRNA + S-adenosyl-L-homocysteine. Its function is as follows. Specifically methylates the N7 position of guanine in position 527 of 16S rRNA. The sequence is that of Ribosomal RNA small subunit methyltransferase G from Neisseria meningitidis serogroup C / serotype 2a (strain ATCC 700532 / DSM 15464 / FAM18).